The chain runs to 596 residues: Inactive metallocarboxypeptidase ecm14 (596 aa).

The signal sequence occupies residues 1–26; the sequence is MSQSHSILSSLILLVAIIFCVPHVIA. A propeptide spanning residues 27–190 is cleaved from the precursor; the sequence is VPWTTDGHAQ…SYPSMAYADA (164 aa). Residue N114 is glycosylated (N-linked (GlcNAc...) asparagine). A Peptidase M14 domain is found at 220 to 540; the sequence is NYQPLSVIIP…NVIKYFGDFL (321 aa). H285 and E288 together coordinate Zn(2+). Substrate-binding positions include 285–288, R343, and 360–361; these read HARE and DR. Cysteines 354 and 376 form a disulfide. N400 is a glycosylation site (N-linked (GlcNAc...) asparagine). H416 contacts Zn(2+). 417 to 418 provides a ligand contact to substrate; that stretch reads SY.

The protein belongs to the peptidase M14 family. It depends on Zn(2+) as a cofactor.

Its subcellular location is the vacuole. The protein localises to the secreted. Functionally, inactive carboxypeptidase that may play a role in cell wall organization and biogenesis. The sequence is that of Inactive metallocarboxypeptidase ecm14 (ecm14) from Sclerotinia sclerotiorum (strain ATCC 18683 / 1980 / Ss-1) (White mold).